Consider the following 439-residue polypeptide: Xylose isomerase (439 aa).

Catalysis depends on residues histidine 101 and aspartate 104. Mg(2+) is bound by residues glutamate 232, glutamate 268, histidine 271, aspartate 296, aspartate 307, aspartate 309, and aspartate 339.

Belongs to the xylose isomerase family. In terms of assembly, homotetramer. Requires Mg(2+) as cofactor.

The protein resides in the cytoplasm. It catalyses the reaction alpha-D-xylose = alpha-D-xylulofuranose. The chain is Xylose isomerase from Actinobacillus pleuropneumoniae serotype 5b (strain L20).